A 536-amino-acid chain; its full sequence is Chaperonin GroEL 2 (536 aa).

ATP contacts are provided by residues 29–32 (TLGP), Lys-50, Gly-416, and Asp-497.

The protein belongs to the chaperonin (HSP60) family. As to quaternary structure, forms a cylinder of 14 subunits composed of two heptameric rings stacked back-to-back. Interacts with the co-chaperonin GroES.

It localises to the cytoplasm. The catalysed reaction is ATP + H2O + a folded polypeptide = ADP + phosphate + an unfolded polypeptide.. Its function is as follows. Together with its co-chaperonin GroES, plays an essential role in assisting protein folding. The GroEL-GroES system forms a nano-cage that allows encapsulation of the non-native substrate proteins and provides a physical environment optimized to promote and accelerate protein folding. In Chlamydia caviae (strain ATCC VR-813 / DSM 19441 / 03DC25 / GPIC) (Chlamydophila caviae), this protein is Chaperonin GroEL 2.